Reading from the N-terminus, the 1146-residue chain is Cell division cycle and apoptosis regulator protein 1 (1146 aa).

The segment at 1–246 (MAQFGGQKNP…AQPQPQSLLQ (246 aa)) is interaction with AR. Residues 200-657 (QRIQTLPNQN…RALSSKGLKS (458 aa)) are interaction with GATA2. The disordered stretch occupies residues 282-351 (IVSQPQPARR…RRERERSPRR (70 aa)). Composition is skewed to basic and acidic residues over residues 290 to 331 (RRLD…ERSP) and 338 to 349 (ERSPRRERERSP). At Ser453 the chain carries Phosphoserine. A coiled-coil region spans residues 591–615 (KQQLVEKLQGERKKADGEQDEEEKD). The disordered stretch occupies residues 599–635 (QGERKKADGEQDEEEKDDGEVKEIATPTHWSKLDPKA). The span at 608–618 (EQDEEEKDDGE) shows a compositional bias: acidic residues. The residue at position 624 (Thr624) is a Phosphothreonine. Positions 633-667 (PKAMKVNDLRKELESRALSSKGLKSQLIARLTKQL) constitute an SAP domain. A Glycyl lysine isopeptide (Lys-Gly) (interchain with G-Cter in ubiquitin) cross-link involves residue Lys634. Residues 640-1146 (DLRKELESRA…EKSKENGSGV (507 aa)) are interaction with GATA1. The residue at position 664 (Thr664) is a Phosphothreonine. Basic and acidic residues-rich tracts occupy residues 671–684 (EQKE…KSEK), 691–716 (DKKS…RQER), 793–814 (KEDK…KKEE), and 829–852 (SGDD…KDDS). Disordered regions lie at residues 671–716 (EQKE…RQER) and 793–912 (KEDK…KEKP). 2 positions are modified to phosphoserine: Ser682 and Ser694. Residues 853 to 884 (KDDDETEEDNNQDEYDPMEAEEAEDEDDDREE) are compositionally biased toward acidic residues. Thr858 is subject to Phosphothreonine. The span at 885–912 (EEVKRDDKRDVSRYCKDRPAKDKEKEKP) shows a compositional bias: basic and acidic residues. Residue Lys1008 forms a Glycyl lysine isopeptide (Lys-Gly) (interchain with G-Cter in SUMO1); alternate linkage. Lys1008 is covalently cross-linked (Glycyl lysine isopeptide (Lys-Gly) (interchain with G-Cter in SUMO2); alternate). Positions 1029 to 1110 (DVGSLLQKLE…LQFENQLNKT (82 aa)) form a coiled coil. Glycyl lysine isopeptide (Lys-Gly) (interchain with G-Cter in SUMO2) cross-links involve residues Lys1063 and Lys1131.

As to quaternary structure, directly interacts with ESR1, NR3C1 and p53/TP53. Interacts (via N-terminus) with CALCOCO1. Interacts with MED1 and GATA1. Interacts with AR and GATA2.

It localises to the cytoplasm. The protein resides in the perinuclear region. Its function is as follows. Associates with components of the Mediator and p160 coactivator complexes that play a role as intermediaries transducing regulatory signals from upstream transcriptional activator proteins to basal transcription machinery at the core promoter. Recruited to endogenous nuclear receptor target genes in response to the appropriate hormone. Also functions as a p53 coactivator. May thus play an important role in transcriptional regulation. May be involved in apoptosis signaling in the presence of the retinoid CD437. Apoptosis induction involves sequestration of 14-3-3 protein(s) and mediated altered expression of multiple cell cycle regulatory genes including MYC, CCNB1 and CDKN1A. Plays a role in cell cycle progression and/or cell proliferation. In association with CALCOCO1 enhances GATA1- and MED1-mediated transcriptional activation from the gamma-globin promoter during erythroid differentiation of K562 erythroleukemia cells. Can act as a both a coactivator and corepressor of AR-mediated transcription. Contributes to chromatin looping and AR transcription complex assembly by stabilizing AR-GATA2 association on chromatin and facilitating MED1 and RNA polymerase II recruitment to AR-binding sites. May play an important role in the growth and tumorigenesis of prostate cancer cells. This Mus musculus (Mouse) protein is Cell division cycle and apoptosis regulator protein 1 (Ccar1).